Here is a 151-residue protein sequence, read N- to C-terminus: UPF0561 protein C2orf68 homolog (151 aa).

Positions 1–89 (MEEEGEAQGR…TLKDEPNDNG (89 aa)) are disordered. 2 stretches are compositionally biased toward basic and acidic residues: residues 32 to 46 (LARD…QAKE) and 70 to 85 (RQRE…KDEP).

It belongs to the UPF0561 family.

The protein is UPF0561 protein C2orf68 homolog of Xenopus laevis (African clawed frog).